The sequence spans 207 residues: 2,3-bisphosphoglycerate-dependent phosphoglycerate mutase (207 aa).

Residues Arg-10–Asn-17, Thr-23–Gly-24, Arg-62, Glu-89–Tyr-92, Lys-100, Arg-116–Arg-117, and Gly-160–Asn-161 each bind substrate. His-11 acts as the Tele-phosphohistidine intermediate in catalysis. Catalysis depends on Glu-89, which acts as the Proton donor/acceptor.

The protein belongs to the phosphoglycerate mutase family. BPG-dependent PGAM subfamily. As to quaternary structure, homodimer.

The catalysed reaction is (2R)-2-phosphoglycerate = (2R)-3-phosphoglycerate. The protein operates within carbohydrate degradation; glycolysis; pyruvate from D-glyceraldehyde 3-phosphate: step 3/5. Functionally, catalyzes the interconversion of 2-phosphoglycerate and 3-phosphoglycerate. The chain is 2,3-bisphosphoglycerate-dependent phosphoglycerate mutase from Afipia carboxidovorans (strain ATCC 49405 / DSM 1227 / KCTC 32145 / OM5) (Oligotropha carboxidovorans).